We begin with the raw amino-acid sequence, 432 residues long: Adenosylhomocysteinase (432 aa).

S2 is subject to N-acetylserine. Substrate contacts are provided by T57, D131, and E156. Position 183 is a phosphoserine (S183). Positions 183 to 350 (SVTKSKFDNL…EGRLVNLGCA (168 aa)) are NAD binding. Residues K186 and D190 each coordinate substrate. K186 carries the post-translational modification N6-(2-hydroxyisobutyryl)lysine. Y193 is modified (phosphotyrosine).

This sequence belongs to the adenosylhomocysteinase family. In terms of assembly, homotetramer. Interaction with AHCYL1. It depends on NAD(+) as a cofactor.

It is found in the cytoplasm. The protein resides in the melanosome. Its subcellular location is the nucleus. The protein localises to the endoplasmic reticulum. It carries out the reaction S-adenosyl-L-homocysteine + H2O = L-homocysteine + adenosine. The protein operates within amino-acid biosynthesis; L-homocysteine biosynthesis; L-homocysteine from S-adenosyl-L-homocysteine: step 1/1. Its function is as follows. Catalyzes the hydrolysis of S-adenosyl-L-homocysteine to form adenosine and homocysteine. Binds copper ions. The protein is Adenosylhomocysteinase (AHCY) of Sus scrofa (Pig).